Here is a 312-residue protein sequence, read N- to C-terminus: Expansin-A24 (312 aa).

The first 27 residues, 1 to 27 (MELLKRKLYAKILMMVMVIWIAPMTNG), serve as a signal peptide directing secretion. A disordered region spans residues 31–86 (ASHVPGGRPGAHPSHGAHPAHGAHPSHGAHPSHGAHPSHGAHPSHGALPSHGGQVP). A compositionally biased stretch (low complexity) spans 40-77 (GAHPSHGAHPAHGAHPSHGAHPSHGAHPSHGAHPSHGA). 6 consecutive repeat copies span residues 42 to 47 (HPSHGA), 48 to 53 (HPAHGA), 54 to 59 (HPSHGA), 60 to 65 (HPSHGA), 66 to 71 (HPSHGA), and 72 to 77 (HPSHGA). The 6 X 6 AA tandem repeats of H-P-S-H-G-A stretch occupies residues 42 to 77 (HPSHGAHPAHGAHPSHGAHPSHGAHPSHGAHPSHGA). Residues 108 to 218 (QGACGYGDLH…RRVPCAKIGG (111 aa)) enclose the Expansin-like EG45 domain. Positions 228 to 307 (HFLMILPYNV…DWKCNGQSFD (80 aa)) constitute an Expansin-like CBD domain.

The protein belongs to the expansin family. Expansin A subfamily.

The protein localises to the secreted. Its subcellular location is the cell wall. It is found in the membrane. Functionally, causes loosening and extension of plant cell walls by disrupting non-covalent bonding between cellulose microfibrils and matrix glucans. No enzymatic activity has been found. The chain is Expansin-A24 (EXPA24) from Arabidopsis thaliana (Mouse-ear cress).